The primary structure comprises 362 residues: Phospho-N-acetylmuramoyl-pentapeptide-transferase (362 aa).

Helical transmembrane passes span 28 to 48 (AACMTALIVSFLLGPALIRWL), 72 to 92 (GTPTMGGVLILAATGISTLLW), 100 to 120 (VWAVLLLTLGYGGIGFADDYL), 134 to 154 (VKLIGQAVIGLIAAIWIMSLT), 170 to 190 (VLIPLGFAFPLFGMLVAMGAS), 201 to 221 (GLAIVPTIIAAGVFALIAYLV), 241 to 261 (LTVFCSALIGAGLGFLWFNAP), 265 to 285 (VFMGDTGSLALGGALGGVAIA), 290 to 310 (IVLAIVGGLFVVETISVIVQV), and 339 to 359 (TIVIRFWIVSFILALAGLATL).

It belongs to the glycosyltransferase 4 family. MraY subfamily. Mg(2+) is required as a cofactor.

The protein localises to the cell inner membrane. It carries out the reaction UDP-N-acetyl-alpha-D-muramoyl-L-alanyl-gamma-D-glutamyl-meso-2,6-diaminopimeloyl-D-alanyl-D-alanine + di-trans,octa-cis-undecaprenyl phosphate = di-trans,octa-cis-undecaprenyl diphospho-N-acetyl-alpha-D-muramoyl-L-alanyl-D-glutamyl-meso-2,6-diaminopimeloyl-D-alanyl-D-alanine + UMP. Its pathway is cell wall biogenesis; peptidoglycan biosynthesis. Its function is as follows. Catalyzes the initial step of the lipid cycle reactions in the biosynthesis of the cell wall peptidoglycan: transfers peptidoglycan precursor phospho-MurNAc-pentapeptide from UDP-MurNAc-pentapeptide onto the lipid carrier undecaprenyl phosphate, yielding undecaprenyl-pyrophosphoryl-MurNAc-pentapeptide, known as lipid I. In Granulibacter bethesdensis (strain ATCC BAA-1260 / CGDNIH1), this protein is Phospho-N-acetylmuramoyl-pentapeptide-transferase.